Here is a 253-residue protein sequence, read N- to C-terminus: Probable transcriptional regulatory protein RC0681 (253 aa).

Positions 1–21 are disordered; the sequence is MAGHSKFKNIQHRKGAQDKKR.

It belongs to the TACO1 family.

It localises to the cytoplasm. The protein is Probable transcriptional regulatory protein RC0681 of Rickettsia conorii (strain ATCC VR-613 / Malish 7).